We begin with the raw amino-acid sequence, 296 residues long: Urease accessory protein UreD (296 aa).

The protein belongs to the UreD family. In terms of assembly, ureD, UreF and UreG form a complex that acts as a GTP-hydrolysis-dependent molecular chaperone, activating the urease apoprotein by helping to assemble the nickel containing metallocenter of UreC. The UreE protein probably delivers the nickel.

The protein localises to the cytoplasm. Required for maturation of urease via the functional incorporation of the urease nickel metallocenter. The protein is Urease accessory protein UreD of Janthinobacterium sp. (strain Marseille) (Minibacterium massiliensis).